A 365-amino-acid polypeptide reads, in one-letter code: Phosphate acyltransferase (365 aa).

It belongs to the PlsX family. As to quaternary structure, homodimer. Probably interacts with PlsY.

It localises to the cytoplasm. The enzyme catalyses a fatty acyl-[ACP] + phosphate = an acyl phosphate + holo-[ACP]. It functions in the pathway lipid metabolism; phospholipid metabolism. Catalyzes the reversible formation of acyl-phosphate (acyl-PO(4)) from acyl-[acyl-carrier-protein] (acyl-ACP). This enzyme utilizes acyl-ACP as fatty acyl donor, but not acyl-CoA. In Klebsiella pneumoniae subsp. pneumoniae (strain ATCC 700721 / MGH 78578), this protein is Phosphate acyltransferase.